Reading from the N-terminus, the 319-residue chain is MTMPPLTLYLAAPRGFCAGVDRAIKIVEMALEKWGAPVYVRHEIVHNKFVVDRLRDMGAVFVEELDEAPTDRPVIFSAHGVPKAIPAEAERRNMVYVDATCPLVSKVHLEAERHHENGLQMIMIGHAGHPETVGTMGQLPEGEVLLVETVEDVAGLEVRDPERLAYITQTTLSIDDTAAIVAALRERFPAIAIPRKEDICYATTNRQGAVKAIAGRIDALLVIGAPNSSNSKRLVEVGRAAGCRVAQLVQRATDIDWEALQGATSVGVAAGASAPEVLVDEVIAAFRARFDTTVKAVETVKERVEFKVPRILREPAETP.

Cys-17 lines the [4Fe-4S] cluster pocket. (2E)-4-hydroxy-3-methylbut-2-enyl diphosphate-binding residues include His-46 and His-79. 2 residues coordinate dimethylallyl diphosphate: His-46 and His-79. Isopentenyl diphosphate-binding residues include His-46 and His-79. Cys-101 contributes to the [4Fe-4S] cluster binding site. A (2E)-4-hydroxy-3-methylbut-2-enyl diphosphate-binding site is contributed by His-129. His-129 contributes to the dimethylallyl diphosphate binding site. His-129 is a binding site for isopentenyl diphosphate. Glu-131 acts as the Proton donor in catalysis. A (2E)-4-hydroxy-3-methylbut-2-enyl diphosphate-binding site is contributed by Thr-170. Residue Cys-200 coordinates [4Fe-4S] cluster. Residues Ser-228, Ser-229, Asn-230, and Ser-273 each contribute to the (2E)-4-hydroxy-3-methylbut-2-enyl diphosphate site. 4 residues coordinate dimethylallyl diphosphate: Ser-228, Ser-229, Asn-230, and Ser-273. 4 residues coordinate isopentenyl diphosphate: Ser-228, Ser-229, Asn-230, and Ser-273.

The protein belongs to the IspH family. Requires [4Fe-4S] cluster as cofactor.

The enzyme catalyses isopentenyl diphosphate + 2 oxidized [2Fe-2S]-[ferredoxin] + H2O = (2E)-4-hydroxy-3-methylbut-2-enyl diphosphate + 2 reduced [2Fe-2S]-[ferredoxin] + 2 H(+). It catalyses the reaction dimethylallyl diphosphate + 2 oxidized [2Fe-2S]-[ferredoxin] + H2O = (2E)-4-hydroxy-3-methylbut-2-enyl diphosphate + 2 reduced [2Fe-2S]-[ferredoxin] + 2 H(+). The protein operates within isoprenoid biosynthesis; dimethylallyl diphosphate biosynthesis; dimethylallyl diphosphate from (2E)-4-hydroxy-3-methylbutenyl diphosphate: step 1/1. It functions in the pathway isoprenoid biosynthesis; isopentenyl diphosphate biosynthesis via DXP pathway; isopentenyl diphosphate from 1-deoxy-D-xylulose 5-phosphate: step 6/6. Its function is as follows. Catalyzes the conversion of 1-hydroxy-2-methyl-2-(E)-butenyl 4-diphosphate (HMBPP) into a mixture of isopentenyl diphosphate (IPP) and dimethylallyl diphosphate (DMAPP). Acts in the terminal step of the DOXP/MEP pathway for isoprenoid precursor biosynthesis. This chain is 4-hydroxy-3-methylbut-2-enyl diphosphate reductase, found in Cereibacter sphaeroides (strain ATCC 17029 / ATH 2.4.9) (Rhodobacter sphaeroides).